The chain runs to 625 residues: MNFQENYDVVVIGGGHAGVEASLAAARMGSKTLLMTINLNMVAFMPCNPSIGGSAKGIVVREIDALGGEMGRNIDKTYIQMKMLNTGKGPAVRALRAQADKDEYADSMKNTVSDQENLTLRQGMVEELILDEEKKKVIGIKTSTGTKYGAKAVIITTGTALRGEIIIGELKYSSGPNNSLSSIGLADNLREIGFEIGRFKTGTPPRVLASSIDYDKTEIQPGDEAPNHFSFMSSDENYLKDQIPCWLTYTTENSHTILRGNLHRAPLFSGIVKGVGPRYCPSIEDKITRFADKPRHQLFLEPEGRNTEEVYIGGLSTSMPEDVQFDLVKSIPGLENAQMMRPGYAIEYDVVMPHQLRPTLETKLVSGLFTAGQTNGTSGYEEAAGQGLVAGINAALKVQGKSEFILKRSEAYIGVMIDDLVTKGTLEPYRLLTSRAEYRLILRHDNADRRLTEIGRQVGLVSDEQWEHYQAKMAQFDREMKRLNSEKLKPLPDTQEKLGKLGFGPIKDALTGAEFLKRPEVHYNEVIDFIGQAPEKIDRTVIELIETEITYEGYIKKAMDQVDKMHRLEAKRIPKNMDWDKLDSIATEARQKFKKINPETLGQASRISGVNPADISILMVYLEGK.

FAD contacts are provided by residues 13-18 (GGGHAG), V125, and S182. Residue 276 to 290 (GPRYCPSIEDKITRF) participates in NAD(+) binding. Q373 contributes to the FAD binding site.

Belongs to the MnmG family. Homodimer. Heterotetramer of two MnmE and two MnmG subunits. FAD serves as cofactor.

Its subcellular location is the cytoplasm. In terms of biological role, NAD-binding protein involved in the addition of a carboxymethylaminomethyl (cmnm) group at the wobble position (U34) of certain tRNAs, forming tRNA-cmnm(5)s(2)U34. The sequence is that of tRNA uridine 5-carboxymethylaminomethyl modification enzyme MnmG from Lactococcus lactis subsp. lactis (strain IL1403) (Streptococcus lactis).